A 482-amino-acid polypeptide reads, in one-letter code: D-inositol 3-phosphate glycosyltransferase (482 aa).

Residue His63 participates in 1D-myo-inositol 3-phosphate binding. UDP-N-acetyl-alpha-D-glucosamine-binding positions include 69–70 and Gly77; that span reads QP. Residues 74-79, Lys132, Tyr165, Thr189, and Arg209 contribute to the 1D-myo-inositol 3-phosphate site; that span reads DAGGMN. UDP-N-acetyl-alpha-D-glucosamine contacts are provided by Arg289, Lys294, and Gln355. Positions 364, 365, and 367 each coordinate Mg(2+). UDP-N-acetyl-alpha-D-glucosamine contacts are provided by Glu377 and Glu385. Thr391 contributes to the Mg(2+) binding site.

It belongs to the glycosyltransferase group 1 family. MshA subfamily. Homodimer.

The enzyme catalyses 1D-myo-inositol 3-phosphate + UDP-N-acetyl-alpha-D-glucosamine = 1D-myo-inositol 2-acetamido-2-deoxy-alpha-D-glucopyranoside 3-phosphate + UDP + H(+). Functionally, catalyzes the transfer of a N-acetyl-glucosamine moiety to 1D-myo-inositol 3-phosphate to produce 1D-myo-inositol 2-acetamido-2-deoxy-glucopyranoside 3-phosphate in the mycothiol biosynthesis pathway. This Salinispora tropica (strain ATCC BAA-916 / DSM 44818 / JCM 13857 / NBRC 105044 / CNB-440) protein is D-inositol 3-phosphate glycosyltransferase.